The primary structure comprises 354 residues: Guanine nucleotide-binding protein G(i) subunit alpha-3 (354 aa).

Glycine 2 carries the N-myristoyl glycine lipid modification. Residue cysteine 3 is the site of S-palmitoyl cysteine attachment. Residues 32–354 enclose the G-alpha domain; it reads KEVKLLLLGA…KNNLKECGLY (323 aa). The segment at 35–48 is G1 motif; that stretch reads KLLLLGAGESGKST. GTP is bound by residues glycine 42, glutamate 43, serine 44, glycine 45, lysine 46, serine 47, threonine 48, aspartate 150, serine 151, leucine 175, arginine 176, threonine 177, arginine 178, valine 179, lysine 180, threonine 181, valine 201, glycine 203, asparagine 269, lysine 270, aspartate 272, leucine 273, cysteine 325, alanine 326, and threonine 327. Residue serine 47 coordinates Mg(2+). The segment at 173 to 181 is G2 motif; that stretch reads DVLRTRVKT. Threonine 181 lines the Mg(2+) pocket. Residues 196 to 205 are G3 motif; the sequence is FKMFDVGGQR. Residues 265–272 are G4 motif; that stretch reads ILFLNKKD. The G5 motif stretch occupies residues 324–329; sequence TCATDT.

The protein belongs to the G-alpha family. G(i/o/t/z) subfamily. As to quaternary structure, heterotrimeric G proteins are composed of 3 units; alpha, beta and gamma. The alpha subunit contains the guanine nucleotide binding site. GTP binding causes dissociation of the heterotrimer, liberating the individual subunits so that they can interact with downstream effector proteins. Forms a complex with CCDC88A/GIV and EGFR which leads to enhanced EGFR signaling and triggering of cell migration; ligand stimulation is required for recruitment of GNAI3 to the complex. Interacts (inactive GDP-bound form) with CCDC88A/GIV (via GBA motif); the interaction leads to activation of GNAI3. Interacts (inactive GDP-bound form) with CCDC88C/DAPLE (via GBA motif); the interaction leads to activation of GNAI3. Interacts (inactive GDP-bound form) with NUCB1 (via GBA motif) and NUCB2 (via GBA motif); the interaction leads to activation of GNAI3. Interacts (inactive GDP-bound form) with PLCD4 (via GBA motif); the interaction leads to activation of GNAI3. Interacts with INSR; the interaction is probably mediated by CCDC88A/GIV. Interacts with GPSM1. Interacts (GDP-bound form) with GPSM2 (via GoLoco domains). Does not interact with RGS2. Interacts with RGS8 and RGS10; this strongly enhances the intrinsic GTPase activity. Interacts with RGS16; this strongly enhances the intrinsic GTPase activity. Interacts with RGS12. Interacts (via active GTP- or inactive GDP-bound form) with RGS14. Interacts (via active GTP-bound form) with TRPC5 (via ANK repeats) in a homotetrameric ion channel; the interaction is direct and activates the channel activity.

Its subcellular location is the cytoplasm. The protein localises to the cell membrane. It localises to the cytoskeleton. The protein resides in the microtubule organizing center. It is found in the centrosome. In terms of biological role, heterotrimeric guanine nucleotide-binding proteins (G proteins) function as transducers downstream of G protein-coupled receptors (GPCRs) in numerous signaling cascades. The alpha chain contains the guanine nucleotide binding site and alternates between an active, GTP-bound state and an inactive, GDP-bound state. Signaling by an activated GPCR promotes GDP release and GTP binding. The alpha subunit has a low GTPase activity that converts bound GTP to GDP, thereby terminating the signal. Both GDP release and GTP hydrolysis are modulated by numerous regulatory proteins. Signaling is mediated via effector proteins, such as adenylate cyclase. Inhibits adenylate cyclase activity, leading to decreased intracellular cAMP levels. Stimulates the activity of receptor-regulated K(+) channels. The active GTP-bound form prevents the association of RGS14 with centrosomes and is required for the translocation of RGS14 from the cytoplasm to the plasma membrane. May play a role in cell division. The active GTP-bound form activates the calcium permeant TRPC5 ion channels. This is Guanine nucleotide-binding protein G(i) subunit alpha-3 (GNAI3) from Cricetulus griseus (Chinese hamster).